Here is a 378-residue protein sequence, read N- to C-terminus: Spermidine/putrescine import ATP-binding protein PotA (378 aa).

In terms of domain architecture, ABC transporter spans 18 to 248; that stretch reads VQLAGIRKCF…PKNLFVAGFI (231 aa). 50–57 contacts ATP; the sequence is GPSGCGKT.

This sequence belongs to the ABC transporter superfamily. Spermidine/putrescine importer (TC 3.A.1.11.1) family. As to quaternary structure, the complex is composed of two ATP-binding proteins (PotA), two transmembrane proteins (PotB and PotC) and a solute-binding protein (PotD).

It localises to the cell inner membrane. The catalysed reaction is ATP + H2O + polyamine-[polyamine-binding protein]Side 1 = ADP + phosphate + polyamineSide 2 + [polyamine-binding protein]Side 1.. Its function is as follows. Part of the ABC transporter complex PotABCD involved in spermidine/putrescine import. Responsible for energy coupling to the transport system. This Shigella dysenteriae serotype 1 (strain Sd197) protein is Spermidine/putrescine import ATP-binding protein PotA.